The sequence spans 125 residues: Fluoride-specific ion channel FluC (125 aa).

4 consecutive transmembrane segments (helical) span residues 5-25 (IFLV…VSLL), 33-53 (IFPL…GILV), 66-86 (VKIF…SFSL), and 100-120 (LVLY…LGYI). The Na(+) site is built by G76 and T79.

This sequence belongs to the fluoride channel Fluc/FEX (TC 1.A.43) family.

The protein resides in the cell inner membrane. The enzyme catalyses fluoride(in) = fluoride(out). Its activity is regulated as follows. Na(+) is not transported, but it plays an essential structural role and its presence is essential for fluoride channel function. Functionally, fluoride-specific ion channel. Important for reducing fluoride concentration in the cell, thus reducing its toxicity. This chain is Fluoride-specific ion channel FluC, found in Azobacteroides pseudotrichonymphae genomovar. CFP2.